We begin with the raw amino-acid sequence, 1241 residues long: DNA-directed RNA polymerase subunit beta (1241 aa).

Residues 1195–1219 (PQDVQENVSGENVDAGYENEDVDID) are disordered.

The protein belongs to the RNA polymerase beta chain family. In terms of assembly, the RNAP catalytic core consists of 2 alpha, 1 beta, 1 beta' and 1 omega subunit. When a sigma factor is associated with the core the holoenzyme is formed, which can initiate transcription.

It carries out the reaction RNA(n) + a ribonucleoside 5'-triphosphate = RNA(n+1) + diphosphate. DNA-dependent RNA polymerase catalyzes the transcription of DNA into RNA using the four ribonucleoside triphosphates as substrates. In Clostridium acetobutylicum (strain ATCC 824 / DSM 792 / JCM 1419 / IAM 19013 / LMG 5710 / NBRC 13948 / NRRL B-527 / VKM B-1787 / 2291 / W), this protein is DNA-directed RNA polymerase subunit beta.